The sequence spans 568 residues: Protein yellow (568 aa).

Residues Met1–Ala28 form the signal peptide. N-linked (GlcNAc...) asparagine glycans are attached at residues Asn151 and Asn222.

This sequence belongs to the major royal jelly protein family.

It is found in the secreted. Its function is as follows. Controls the pigmentation pattern of the adult cuticle and larval mouth parts. The polypeptide is Protein yellow (y) (Drosophila madeirensis (Fruit fly)).